A 524-amino-acid chain; its full sequence is Ribonuclease Y (524 aa).

The helical transmembrane segment at 7–27 (LGGLLTGIVIAIIASIIASVI) threads the bilayer. A KH domain is found at 214-299 (TVSVVPLPND…EMVEKARKEV (86 aa)). Positions 340–433 (VLSHSIEVAR…VQAADSISAA (94 aa)) constitute an HD domain.

It belongs to the RNase Y family.

Its subcellular location is the cell membrane. In terms of biological role, endoribonuclease that initiates mRNA decay. This is Ribonuclease Y from Acetivibrio thermocellus (strain ATCC 27405 / DSM 1237 / JCM 9322 / NBRC 103400 / NCIMB 10682 / NRRL B-4536 / VPI 7372) (Clostridium thermocellum).